An 82-amino-acid chain; its full sequence is Small ribosomal subunit protein uS15 (82 aa).

The protein belongs to the universal ribosomal protein uS15 family. As to quaternary structure, part of the 30S ribosomal subunit. Forms a bridge to the 50S subunit in the 70S ribosome, contacting the 23S rRNA.

In terms of biological role, one of the primary rRNA binding proteins, it binds directly to 16S rRNA where it helps nucleate assembly of the platform of the 30S subunit by binding and bridging several RNA helices of the 16S rRNA. Functionally, forms an intersubunit bridge (bridge B4) with the 23S rRNA of the 50S subunit in the ribosome. The sequence is that of Small ribosomal subunit protein uS15 from Pelagibacter ubique (strain HTCC1062).